Reading from the N-terminus, the 276-residue chain is Omega-amidase NIT2 (276 aa).

The CN hydrolase domain occupies 4–248 (FRLALIQLQV…ETILYSDIDL (245 aa)). Position 26 is a phosphoserine (S26). E43 acts as the Proton acceptor in catalysis. N6-acetyllysine; alternate is present on K68. Position 68 is an N6-succinyllysine; alternate (K68). Catalysis depends on K112, which acts as the Proton donor. 2 positions are modified to N6-succinyllysine: K123 and K130. C153 (nucleophile) is an active-site residue.

This sequence belongs to the carbon-nitrogen hydrolase superfamily. NIT1/NIT2 family. As to quaternary structure, homodimer.

It localises to the cytoplasm. The catalysed reaction is a monoamide of a dicarboxylate + H2O = a dicarboxylate + NH4(+). The enzyme catalyses 2-oxoglutaramate + H2O = 2-oxoglutarate + NH4(+). It carries out the reaction 2-oxosuccinamate + H2O = oxaloacetate + NH4(+). In terms of biological role, has omega-amidase activity. The role of omega-amidase is to remove potentially toxic intermediates by converting 2-oxoglutaramate and 2-oxosuccinamate to biologically useful 2-oxoglutarate and oxaloacetate, respectively. Can also hydrolyze gamma-monomethyl-alpha-ketoglutarate in vitro. This is Omega-amidase NIT2 from Mus musculus (Mouse).